Here is a 303-residue protein sequence, read N- to C-terminus: Elongation factor Ts (303 aa).

An involved in Mg(2+) ion dislocation from EF-Tu region spans residues 80–83; it reads TDFV.

It belongs to the EF-Ts family.

It localises to the cytoplasm. Associates with the EF-Tu.GDP complex and induces the exchange of GDP to GTP. It remains bound to the aminoacyl-tRNA.EF-Tu.GTP complex up to the GTP hydrolysis stage on the ribosome. The chain is Elongation factor Ts from Clostridium botulinum (strain Alaska E43 / Type E3).